We begin with the raw amino-acid sequence, 325 residues long: uncharacterized protein (325 aa).

A disordered region spans residues Met1–Gln75. Pro residues-rich tracts occupy residues Tyr24–Gly39 and Tyr50–Tyr70. The next 4 membrane-spanning stretches (helical) occupy residues Ala96–Ala116, Ile153–Ile173, Leu205–Phe225, and Leu273–Ile293.

The protein resides in the cell membrane. This is an uncharacterized protein from Mycobacterium tuberculosis (strain CDC 1551 / Oshkosh).